The chain runs to 360 residues: DNA replication and repair protein RecF (360 aa).

Residue 30–37 (GHNGSGKT) coordinates ATP.

The protein belongs to the RecF family.

The protein resides in the cytoplasm. Its function is as follows. The RecF protein is involved in DNA metabolism; it is required for DNA replication and normal SOS inducibility. RecF binds preferentially to single-stranded, linear DNA. It also seems to bind ATP. The protein is DNA replication and repair protein RecF of Actinobacillus pleuropneumoniae serotype 7 (strain AP76).